Consider the following 400-residue polypeptide: Nicotinate phosphoribosyltransferase (400 aa).

His220 carries the phosphohistidine; by autocatalysis modification.

This sequence belongs to the NAPRTase family. In terms of processing, transiently phosphorylated on a His residue during the reaction cycle. Phosphorylation strongly increases the affinity for substrates and increases the rate of nicotinate D-ribonucleotide production. Dephosphorylation regenerates the low-affinity form of the enzyme, leading to product release.

It carries out the reaction nicotinate + 5-phospho-alpha-D-ribose 1-diphosphate + ATP + H2O = nicotinate beta-D-ribonucleotide + ADP + phosphate + diphosphate. Its pathway is cofactor biosynthesis; NAD(+) biosynthesis; nicotinate D-ribonucleotide from nicotinate: step 1/1. In terms of biological role, catalyzes the synthesis of beta-nicotinate D-ribonucleotide from nicotinate and 5-phospho-D-ribose 1-phosphate at the expense of ATP. The protein is Nicotinate phosphoribosyltransferase of Escherichia coli O7:K1 (strain IAI39 / ExPEC).